We begin with the raw amino-acid sequence, 85 residues long: V-type proton ATPase subunit f (85 aa).

At 1-10 the chain is on the lumenal side; the sequence is MRPVVSTGKA. The chain crosses the membrane as a helical span at residues 11–31; that stretch reads WCCTVLSAFGVVILSVIAHLF. Residues 32–54 lie on the Cytoplasmic side of the membrane; it reads NTNHESFVGSINDPEDGPAVAHT. The helical transmembrane segment at 55–75 threads the bilayer; sequence VYLAALVYLVFFVFCGFQVYL. Residues 76 to 85 lie on the Lumenal side of the membrane; the sequence is ARRKPSIELR.

V-ATPase is a heteromultimeric enzyme composed of a peripheral catalytic V1 complex (components A to H) attached to an integral membrane V0 proton pore complex (components: a, c, c', c'', d, e, f and VOA1).

The protein localises to the endoplasmic reticulum membrane. Its subcellular location is the vacuole membrane. Its function is as follows. Accessory component of the V0 complex of vacuolar(H+)-ATPase (V-ATPase), a multisubunit enzyme composed of a peripheral complex (V1) that hydrolyzes ATP and a membrane integral complex (V0) that translocates protons. V-ATPase is responsible for acidifying and maintaining the pH of intracellular compartments. The protein is V-type proton ATPase subunit f of Saccharomyces cerevisiae (strain ATCC 204508 / S288c) (Baker's yeast).